The chain runs to 191 residues: Small ribosomal subunit protein uS9c (191 aa).

Positions 166–191 are disordered; the sequence is TQDSRVKERRKYGLKKARKASQYHKR. Basic residues predominate over residues 172-191; sequence KERRKYGLKKARKASQYHKR.

This sequence belongs to the universal ribosomal protein uS9 family.

The protein resides in the plastid. It is found in the chloroplast. In Chlamydomonas reinhardtii (Chlamydomonas smithii), this protein is Small ribosomal subunit protein uS9c (rps9).